The sequence spans 595 residues: Estrogen receptor (595 aa).

The modulating(transactivation AF-1); mediates interaction with MACROD1 stretch occupies residues 1–184 (MTMTLHTKAS…AMESVKETRY (184 aa)). An O-linked (GlcNAc) serine glycan is attached at Ser10. A required for interaction with NCOA1 region spans residues 35–47 (LERALSEVYVDSS). Residues 35–174 (LERALSEVYV…LSSSSEKGSM (140 aa)) form an interaction with DDX5; self-association region. Phosphoserine; by CDK2 is present on residues Ser103 and Ser105. Ser118 carries the post-translational modification Phosphoserine. Residues 143-174 (DSGPPAFYRSNSDNRRQSGRERLSSSSEKGSM) form a disordered region. Positions 154–165 (SDNRRQSGRERL) are enriched in basic and acidic residues. Ser167 bears the Phosphoserine; by CK2 mark. 2 NR C4-type zinc fingers span residues 185–205 (CAVC…CEGC) and 221–245 (CPAT…LRKC). A DNA-binding region (nuclear receptor) is located at residues 185–250 (CAVCNDYASG…RLRKCYEVGM (66 aa)). The tract at residues 185-310 (CAVCNDYASG…TKKNSPALSL (126 aa)) is mediates interaction with DNTTIP2. The hinge stretch occupies residues 251–310 (MKGGIRKDRRGGRMLKHKRQRDDLEGRNDMGPSGDMRATNLWPSPLVIKHTKKNSPALSL). The residue at position 260 (Arg260) is an Asymmetric dimethylarginine; by PRMT1. A compositionally biased stretch (basic residues) spans 260–269 (RGGRMLKHKR). The disordered stretch occupies residues 260-285 (RGGRMLKHKRQRDDLEGRNDMGPSGD). The segment at 262–595 (GRMLKHKRQR…SEAESFPNTI (334 aa)) is interaction with AKAP13. The tract at residues 264–595 (MLKHKRQRDD…SEAESFPNTI (332 aa)) is self-association. The NR LBD domain maps to 311–547 (TADQMVSALL…DLLLEMLDAH (237 aa)). The transactivation AF-2 stretch occupies residues 311–595 (TADQMVSALL…SEAESFPNTI (285 aa)). 2 residues coordinate 17beta-estradiol: Glu353 and Arg394. The S-palmitoyl cysteine moiety is linked to residue Cys447. 17beta-estradiol is bound at residue His524. Tyr537 bears the Phosphotyrosine; by Tyr-kinases mark. Residues 554–578 (SRMGVSPEEPSQSQLTTTNSTSSHS) are disordered. Residues 564-578 (SQSQLTTTNSTSSHS) show a composition bias toward low complexity. O-linked (GlcNAc) threonine glycosylation is present at Thr571.

The protein belongs to the nuclear hormone receptor family. NR3 subfamily. As to quaternary structure, binds DNA as a homodimer. Can form a heterodimer with ESR2. Interacts with coactivator NCOA5. Interacts with PELP1, the interaction is enhanced by 17-beta-estradiol; the interaction increases ESR1 transcriptional activity. Interacts with NCOA7; the interaction is ligand-inducible. Interacts with AKAP13, CUEDC2, HEXIM1, KDM5A, MAP1S, SMARD1, and UBE1C. Interacts with MUC1; the interaction is stimulated by 7 beta-estradiol (E2) and enhances ESR1-mediated transcription. Interacts with DNTTIP2, and UIMC1. Interacts with KMT2D/MLL2. Interacts with ATAD2; the interaction is enhanced by estradiol. Interacts with KIF18A and LDB1. Interacts with RLIM (via its C-terminus). Interacts with MACROD1. Interacts with SH2D4A and PLCG. Interacts with SH2D4A; the interaction blocks binding to PLCG and inhibits estrogen-induced cell proliferation. Interacts with DYNLL1. Interacts with CCDC62; the interaction requires estradiol and appears to enhance the transcription of target genes. Interacts with NR2C1; the interaction prevents homodimerization of ESR1 and suppresses its transcriptional activity and cell growth. Interacts with DNAAF4. Interacts with PRMT2. Interacts with RBFOX2. Interacts with EP300; the interaction is estrogen-dependent and enhanced by CITED1. Interacts with CITED1; the interaction is estrogen-dependent. Interacts with FAM120B, FOXL2, PHB2 and SLC30A9. Interacts with coactivators NCOA3 and NCOA6. Interacts with STK3/MST2 only in the presence of SAV1 and vice-versa. Binds to CSNK1D. Interacts with NCOA2; NCOA2 can interact with ESR1 AF-1 and AF-2 domains simultaneously and mediate their transcriptional synergy. Interacts with DDX5. Interacts with NCOA1; the interaction seems to require a self-association of N-terminal and C-terminal regions. Interacts with ZNF366, DDX17, NFKB1, RELA, SP1 and SP3. Interacts with NRIP1. Interacts with GPER1; the interaction occurs in an estrogen-dependent manner. Interacts with CLOCK and the interaction is stimulated by estrogen. Interacts with TRIP4 (ufmylated); estrogen dependent. Interacts with LMTK3; the interaction phosphorylates ESR1 (in vitro) and protects it against proteasomal degradation. Interacts with CCAR2 (via N-terminus) in a ligand-independent manner. Interacts with ZFHX3. Interacts with SFR1 in a ligand-dependent and -independent manner. Interacts with DCAF13, LATS1 and DCAF1; regulates ESR1 ubiquitination and ubiquitin-mediated proteasomal degradation. Interacts (via DNA-binding domain) with POU4F2 (C-terminus); this interaction increases the estrogen receptor ESR1 transcriptional activity in a DNA- and ligand 17-beta-estradiol-independent manner. Interacts with ESRRB isoform 1. Interacts with UBE3A and WBP2. Interacts with GTF2B. Interacts with RBM39. In the absence of hormonal ligand, interacts with TACC1. Interacts with PI3KR1 or PI3KR2 and PTK2/FAK1. Interacts with SRC. Interacts with BAG1; the interaction is promoted in the absence of estradiol (17-beta-estradiol/E2). Interacts with and ubiquitinated by STUB1; the interaction is promoted in the absence of estradiol (17-beta-estradiol/E2). Interacts with NEDD8. Ubiquitinated; regulated by LATS1 via DCAF1 it leads to ESR1 proteasomal degradation. Deubiquitinated by OTUB1. Ubiquitinated by STUB1/CHIP; in the CA1 hippocampal region following loss of endogenous circulating estradiol (17-beta-estradiol/E2). Ubiquitinated by UBR5, leading to its degradation: UBR5 specifically recognizes and binds ligand-bound ESR1 when it is not associated with coactivators (NCOAs). In presence of NCOAs, the UBR5-degron is not accessible, preventing its ubiquitination and degradation. Post-translationally, phosphorylated by cyclin A/CDK2 and CK1. Phosphorylation probably enhances transcriptional activity. Dephosphorylation at Ser-118 by PPP5C inhibits its transactivation activity. Phosphorylated by LMTK3 (in vitro). In terms of processing, palmitoylated at Cys-447 by ZDHHC7 and ZDHHC21. Palmitoylation is required for plasma membrane targeting and for rapid intracellular signaling via ERK and AKT kinases and cAMP generation, but not for signaling mediated by the nuclear hormone receptor. Dimethylated by PRMT1 at Arg-260. The methylation may favor cytoplasmic localization. Demethylated by JMJD6 at Arg-260.

The protein localises to the nucleus. It is found in the cytoplasm. The protein resides in the golgi apparatus. It localises to the cell membrane. Functionally, nuclear hormone receptor. The steroid hormones and their receptors are involved in the regulation of eukaryotic gene expression and affect cellular proliferation and differentiation in target tissues. Ligand-dependent nuclear transactivation involves either direct homodimer binding to a palindromic estrogen response element (ERE) sequence or association with other DNA-binding transcription factors, such as AP-1/c-Jun, c-Fos, ATF-2, Sp1 and Sp3, to mediate ERE-independent signaling. Ligand binding induces a conformational change allowing subsequent or combinatorial association with multiprotein coactivator complexes through LXXLL motifs of their respective components. Mutual transrepression occurs between the estrogen receptor (ER) and NF-kappa-B in a cell-type specific manner. Decreases NF-kappa-B DNA-binding activity and inhibits NF-kappa-B-mediated transcription from the IL6 promoter and displace RELA/p65 and associated coregulators from the promoter. Recruited to the NF-kappa-B response element of the CCL2 and IL8 promoters and can displace CREBBP. Present with NF-kappa-B components RELA/p65 and NFKB1/p50 on ERE sequences. Can also act synergistically with NF-kappa-B to activate transcription involving respective recruitment adjacent response elements; the function involves CREBBP. Can activate the transcriptional activity of TFF1. Also mediates membrane-initiated estrogen signaling involving various kinase cascades. Essential for MTA1-mediated transcriptional regulation of BRCA1 and BCAS3. Maintains neuronal survival in response to ischemic reperfusion injury when in the presence of circulating estradiol (17-beta-estradiol/E2). This chain is Estrogen receptor (ESR1), found in Mesocricetus auratus (Golden hamster).